Consider the following 291-residue polypeptide: MKRIALFLLTNLAVVVVLGIVASLLGVNRYLTANGLNLGALLGFAFIMGFGGAIISLLMSKPIAKWSSGVRVIDGTGSADEAWIVQTVRKFADQAGIGMPEVGIFEGDPNAFATGAFKNNALVAVSTGLLQGMTREEVEAVIGHEVAHIANGDMVTMTLIQGVMNTFVVFLSRVIGYAVDSFLRRNDENSSGPGIGYMVTTIVLDIVLGFLASMIVAWFSRQREFRADAGAARLMGRRQPMINALARLGGMHPAELPKGLQAMGIAGGIGKLFSTHPPIEERIAALQNAQG.

Transmembrane regions (helical) follow at residues I4–L24 and L38–L58. Residue H144 coordinates Zn(2+). E145 is an active-site residue. H148 lines the Zn(2+) pocket. A run of 2 helical transmembrane segments spans residues L159–V179 and V199–F219. E224 is a Zn(2+) binding site.

The protein belongs to the peptidase M48B family. Zn(2+) is required as a cofactor.

It is found in the cell inner membrane. The sequence is that of Protease HtpX homolog from Paracidovorax citrulli (strain AAC00-1) (Acidovorax citrulli).